A 155-amino-acid polypeptide reads, in one-letter code: Ribosome maturation factor RimP (155 aa).

This sequence belongs to the RimP family.

It localises to the cytoplasm. Functionally, required for maturation of 30S ribosomal subunits. This Phocaeicola vulgatus (strain ATCC 8482 / DSM 1447 / JCM 5826 / CCUG 4940 / NBRC 14291 / NCTC 11154) (Bacteroides vulgatus) protein is Ribosome maturation factor RimP.